The chain runs to 89 residues: Small ribosomal subunit protein uS15 (89 aa).

This sequence belongs to the universal ribosomal protein uS15 family. As to quaternary structure, part of the 30S ribosomal subunit. Forms a bridge to the 50S subunit in the 70S ribosome, contacting the 23S rRNA.

Functionally, one of the primary rRNA binding proteins, it binds directly to 16S rRNA where it helps nucleate assembly of the platform of the 30S subunit by binding and bridging several RNA helices of the 16S rRNA. In terms of biological role, forms an intersubunit bridge (bridge B4) with the 23S rRNA of the 50S subunit in the ribosome. The sequence is that of Small ribosomal subunit protein uS15 from Porphyromonas gingivalis (strain ATCC 33277 / DSM 20709 / CIP 103683 / JCM 12257 / NCTC 11834 / 2561).